Here is a 302-residue protein sequence, read N- to C-terminus: Coenzyme PQQ synthesis protein B (302 aa).

Belongs to the PqqB family.

It functions in the pathway cofactor biosynthesis; pyrroloquinoline quinone biosynthesis. May be involved in the transport of PQQ or its precursor to the periplasm. The polypeptide is Coenzyme PQQ synthesis protein B (Azotobacter vinelandii (strain DJ / ATCC BAA-1303)).